The chain runs to 312 residues: Glyoxylate/hydroxypyruvate reductase A (312 aa).

Arg227 is a catalytic residue. The Proton donor role is filled by His275.

Belongs to the D-isomer specific 2-hydroxyacid dehydrogenase family. GhrA subfamily.

Its subcellular location is the cytoplasm. The enzyme catalyses glycolate + NADP(+) = glyoxylate + NADPH + H(+). The catalysed reaction is (R)-glycerate + NAD(+) = 3-hydroxypyruvate + NADH + H(+). It carries out the reaction (R)-glycerate + NADP(+) = 3-hydroxypyruvate + NADPH + H(+). Its function is as follows. Catalyzes the NADPH-dependent reduction of glyoxylate and hydroxypyruvate into glycolate and glycerate, respectively. The polypeptide is Glyoxylate/hydroxypyruvate reductase A (Escherichia coli O157:H7).